The primary structure comprises 391 residues: Probable malate dehydrogenase 1 (391 aa).

68–74 (GAAGQIA) is a binding site for NAD(+). Positions 149 and 155 each coordinate substrate. Residues Asn162, Gln169, and 186–188 (VGN) contribute to the NAD(+) site. Substrate-binding residues include Asn188 and Arg219. The active-site Proton acceptor is His244.

This sequence belongs to the LDH/MDH superfamily. MDH type 2 family. In terms of assembly, homodimer.

The enzyme catalyses (S)-malate + NAD(+) = oxaloacetate + NADH + H(+). Catalyzes the reversible oxidation of malate to oxaloacetate. In Dictyostelium discoideum (Social amoeba), this protein is Probable malate dehydrogenase 1 (mdhA).